The sequence spans 555 residues: MAATGAAATDLEVVRGKRAALFFATVVIVLGLPLWWKTTETYRAPLPYSQISGLNSLKLRLMVPVTVVFTQESVPLDDQEKLPFTVVHEREIPLKYKLKIKCRFQKAYRRALDHEEAALSLGNIQEAEAMLAEPSEQAEGSLTVYVISERCSLLPQDMMSYIGPKRMAVVRGITHREAFNIIGRRIIQVVQAMSLTEDVLAAALADHLPEDKWSSDKRRPLKSSLGYEITFSLLNPDPKSHDVHWDIEGAVRRYVQPFLSALSAAGNFSVDSQILYYAVLGVNPRFDSASSSYYLAAHSLPHVINPVESRLGSSAASLYPVLNFLLYVPELAHSPLYIQDKDGAPVATNAFHSPRWGGIMVYNVDPKAYNGSQLPVRVEVDMMRVMEVFLAQLRLLFGIAQPQLPPKCLFFGPKSEGIMTWELDRLLWARSVENLATATTTLTSLAQLLGKISNIVIKDDVASEVYRAVAAVQKAAEELSSGHLASAFAASQEAVTSSERAFFDPSLLHLLYFPDDQKFAIYIPLFLPMAVPILLSLFKIFLETRKSWKKPEKTD.

Over 2–18 the chain is Cytoplasmic; sequence AATGAAATDLEVVRGKR. 2 residues coordinate a cardiolipin: arginine 15 and arginine 18. The chain crosses the membrane as a helical span at residues 19–39; the sequence is AALFFATVVIVLGLPLWWKTT. The Lumenal portion of the chain corresponds to 40–517; sequence ETYRAPLPYS…LHLLYFPDDQ (478 aa). N-linked (GlcNAc...) asparagine glycosylation is found at asparagine 267 and asparagine 370. The helical transmembrane segment at 518-532 threads the bilayer; the sequence is KFAIYIPLFLPMAVP. Over 533-555 the chain is Cytoplasmic; the sequence is ILLSLFKIFLETRKSWKKPEKTD.

The protein belongs to the PIGS family. As to quaternary structure, heteropentamer. Part of the GPI-anchor transamidase complex, consisting of PIGK, PIGT, PIGS, PIGU and GAA1.

The protein localises to the endoplasmic reticulum membrane. Its pathway is glycolipid biosynthesis; glycosylphosphatidylinositol-anchor biosynthesis. Component of the glycosylphosphatidylinositol-anchor (GPI-anchor) transamidase (GPI-T) complex that catalyzes the formation of the linkage between a proprotein and a GPI-anchor and participates in GPI anchored protein biosynthesis. In Bos taurus (Bovine), this protein is GPI-anchor transamidase component PIGS.